The following is a 178-amino-acid chain: Large ribosomal subunit protein uL6 (178 aa).

It belongs to the universal ribosomal protein uL6 family. As to quaternary structure, part of the 50S ribosomal subunit.

Functionally, this protein binds to the 23S rRNA, and is important in its secondary structure. It is located near the subunit interface in the base of the L7/L12 stalk, and near the tRNA binding site of the peptidyltransferase center. This Coxiella burnetii (strain CbuK_Q154) (Coxiella burnetii (strain Q154)) protein is Large ribosomal subunit protein uL6.